A 139-amino-acid chain; its full sequence is Dehydrin DHN1 (139 aa).

The interval 1-139 is disordered; sequence MEYQGQHGHA…IKEKLPGGQH (139 aa). Residues 23-42 show a composition bias toward gly residues; the sequence is GHGGFTGGPTGTHGAAGVGG. Residues 49-58 are compositionally biased toward basic and acidic residues; it reads RDGHKTDGVL. A compositionally biased stretch (low complexity) spans 59-68; the sequence is RRSGSSSSSS. The segment covering 83–98 has biased composition (basic and acidic residues); sequence KEKIKEKLPGGAHKDA. The segment covering 99–109 has biased composition (low complexity); that stretch reads AGQQQQTAMAG. Basic and acidic residues predominate over residues 120-139; sequence TGEKKGVMDKIKEKLPGGQH.

This sequence belongs to the plant dehydrin family.

The sequence is that of Dehydrin DHN1 (DHN1) from Hordeum vulgare (Barley).